The following is a 625-amino-acid chain: Histone-lysine N-methyltransferase set9 (625 aa).

The region spanning 120 to 234 (SPFEVTTTNR…IGEEITVSYG (115 aa)) is the SET domain. Disordered stretches follow at residues 260 to 348 (PHVD…ETSI), 368 to 405 (GSAVEVSQASATDCDSSPSLEADESHHSSTSTTPTSIG), 432 to 451 (ITGQPHNDRHPPGTDNDMLS), 457 to 476 (TDNPQKPKRSRGSRWKHGVV), and 582 to 625 (VSFG…RMTM). Polar residues-rich tracts occupy residues 269–286 (SKASTPALNDEAISNDSL) and 372–386 (EVSQASATDCDSSPS). Over residues 462-473 (KPKRSRGSRWKH) the composition is skewed to basic residues. A compositionally biased stretch (basic and acidic residues) spans 593-610 (SEPRTETEDSEACDDRRN). The segment covering 611–625 (TRASRTRTRSLRMTM) has biased composition (basic residues).

This sequence belongs to the class V-like SAM-binding methyltransferase superfamily. Histone-lysine methyltransferase family. Suvar4-20 subfamily.

The protein localises to the nucleus. The protein resides in the chromosome. It catalyses the reaction L-lysyl(20)-[histone H4] + 3 S-adenosyl-L-methionine = N(6),N(6),N(6)-trimethyl-L-lysyl(20)-[histone H4] + 3 S-adenosyl-L-homocysteine + 3 H(+). Its function is as follows. Histone methyltransferase that trimethylates 'Lys-20' of histone H4 to form H4K20me3. This is Histone-lysine N-methyltransferase set9 (set9) from Aspergillus oryzae (strain ATCC 42149 / RIB 40) (Yellow koji mold).